The chain runs to 301 residues: uncharacterized protein (301 aa).

Catalysis depends on charge relay system residues Ser-44 and Tyr-107. The Proton donor role is filled by Tyr-133. The active-site Schiff-base intermediate with substrate is the Lys-162.

The protein belongs to the DapA family. In terms of assembly, homotetramer.

It localises to the cytoplasm. This is an uncharacterized protein from Pyrobaculum aerophilum (strain ATCC 51768 / DSM 7523 / JCM 9630 / CIP 104966 / NBRC 100827 / IM2).